The chain runs to 287 residues: MLLLWALLALGCLRCGWTVNLQPQLASVTFATNNPTLTTVALEKPLCMFDSSEPLSGSYEVYLYAMVDSAMSRNVSVQDSAGVPLSTTFRQTQGGRSGPYKAAAFDLTPCGDLPSLDAVGDVTQASEILNAYLVRVGNNGTCFWDPNFQGLCNPPLTAATEYRFKYVLVNMSTGLVQDQTLWSDPIWTNRPIPYSAIDTWPGRRSGGMIVITSILGSLPFFLLVGFAGAIILSFVDMGSSDGEMTHDSQITQEAVPKTLGTSEPSYSSVNRGPPLDRAEVFSSKLQD.

An N-terminal signal peptide occupies residues 1–18 (MLLLWALLALGCLRCGWT). Residues 19–207 (VNLQPQLASV…DTWPGRRSGG (189 aa)) lie on the Lumenal side of the membrane. 3 N-linked (GlcNAc...) asparagine glycosylation sites follow: N74, N139, and N170. The chain crosses the membrane as a helical span at residues 208–235 (MIVITSILGSLPFFLLVGFAGAIILSFV). Residues 236 to 287 (DMGSSDGEMTHDSQITQEAVPKTLGTSEPSYSSVNRGPPLDRAEVFSSKLQD) lie on the Cytoplasmic side of the membrane. The tract at residues 243-287 (EMTHDSQITQEAVPKTLGTSEPSYSSVNRGPPLDRAEVFSSKLQD) is disordered. Residues 259–270 (LGTSEPSYSSVN) show a composition bias toward polar residues.

It belongs to the uroplakin-3 family. Heterodimer with uroplakin-1B (UPK1B).

It localises to the endoplasmic reticulum membrane. Component of the asymmetric unit membrane (AUM); a highly specialized biomembrane elaborated by terminally differentiated urothelial cells. May play an important role in AUM-cytoskeleton interaction in terminally differentiated urothelial cells. It also contributes to the formation of urothelial glycocalyx which may play an important role in preventing bacterial adherence. This Mus musculus (Mouse) protein is Uroplakin-3a (Upk3a).